A 632-amino-acid chain; its full sequence is Fem-3 mRNA-binding factor 2 (632 aa).

Positions 1–11 (MDQSKMRRTNQ) are enriched in basic residues. The tract at residues 1-37 (MDQSKMRRTNQFRKTSQKPPSTGIDSYPTPAQSPMAQ) is disordered. The span at 12-35 (FRKTSQKPPSTGIDSYPTPAQSPM) shows a compositional bias: polar residues. Residues 162-566 (TRSNNVLPTW…KMIETLANLR (405 aa)) form the PUM-HD domain. Pumilio repeat units lie at residues 187–225 (EVLD…QLFE), 226–264 (QVIG…GYTK), 271–307 (NFIS…KLVQ), 308–332 (ALPR…QKVV), 345–384 (DFVA…DLTS), 400–436 (SVTN…CIIE), 438–473 (CLMR…EMMD), and 484–521 (DTGK…RQTK). The disordered stretch occupies residues 609 to 632 (MLEPRSNKSSVSVKFSSSGSHGDD). Low complexity predominate over residues 615–632 (NKSSVSVKFSSSGSHGDD).

Interacts (via C-terminus) with gld-3 isoform A in an RNA-independent manner. Interacts with dlc-1, and is required for the localization of fbf-2 to P granules. Interacts (via RNA-binding domain) with lst-1, probably displaces bound auto-inhibitory C-terminal tail and alters its RNA-binding affinity. In terms of tissue distribution, expressed specifically in the germline (at protein level).

Its subcellular location is the cytoplasm. It is found in the cytoplasmic granule. Functionally, RNA-binding protein that binds to the consensus sequence 5'-UGUGCCAUA-3' in mRNA 3'-UTRs. Involved in the control of stem cells and sex determination in the C.elegans hermaphrodite germline. May also play a role in the hermaphrodite germline proliferation and oogenesis. By binding to the 3'-UTR, represses phosphatase lip-1 expression in the distal part of the germline mitotic zone. Binds specifically to the regulatory region of fem-3 3'-UTR and mediates the sperm/oocyte switch. Negatively regulates gld-3 expression possibly by directly binding to two sites within the gld-3 isoform b 3'-UTR. Suppresses germline tumor formation by preventing the dedifferentiation of secondary spermatocytes. C-terminal disordered region probably auto-inhibits RNA binding; auto-inhibition may be reversed by interaction with lst-1. This is Fem-3 mRNA-binding factor 2 from Caenorhabditis elegans.